A 785-amino-acid chain; its full sequence is Mitochondrial intermediate peptidase (785 aa).

The N-terminal 27 residues, M1–A27, are a transit peptide targeting the mitochondrion. The segment at L26–D52 is disordered. Residue H566 coordinates Zn(2+). Residue E567 is part of the active site. 2 residues coordinate Zn(2+): H570 and H573.

This sequence belongs to the peptidase M3 family. Zn(2+) is required as a cofactor.

It is found in the mitochondrion matrix. It catalyses the reaction Release of an N-terminal octapeptide as second stage of processing of some proteins imported into the mitochondrion.. Its function is as follows. Cleaves proteins, imported into the mitochondrion, to their mature size. While most mitochondrial precursor proteins are processed to the mature form in one step by mitochondrial processing peptidase (MPP), the sequential cleavage by MIP of an octapeptide after initial processing by MPP is a required step for a subgroup of nuclear-encoded precursor proteins destined for the matrix or the inner membrane. In Sclerotinia sclerotiorum (strain ATCC 18683 / 1980 / Ss-1) (White mold), this protein is Mitochondrial intermediate peptidase (oct1).